The chain runs to 479 residues: Ribosomal RNA small subunit methyltransferase F (479 aa).

S-adenosyl-L-methionine-binding positions include alanine 125–lysine 131, glutamate 149, aspartate 176, and aspartate 194. Cysteine 247 serves as the catalytic Nucleophile.

This sequence belongs to the class I-like SAM-binding methyltransferase superfamily. RsmB/NOP family.

The protein resides in the cytoplasm. The catalysed reaction is cytidine(1407) in 16S rRNA + S-adenosyl-L-methionine = 5-methylcytidine(1407) in 16S rRNA + S-adenosyl-L-homocysteine + H(+). Functionally, specifically methylates the cytosine at position 1407 (m5C1407) of 16S rRNA. This Shigella dysenteriae serotype 1 (strain Sd197) protein is Ribosomal RNA small subunit methyltransferase F.